The primary structure comprises 239 residues: Large ribosomal subunit protein uL2 (239 aa).

2 disordered regions span residues 1 to 20 (MGKS…FRSP) and 203 to 239 (PFGG…GRRK). The segment covering 222–239 (PPGRKVGHIAARRTGRRK) has biased composition (basic residues).

The protein belongs to the universal ribosomal protein uL2 family. In terms of assembly, part of the 50S ribosomal subunit. Forms a bridge to the 30S subunit in the 70S ribosome.

In terms of biological role, one of the primary rRNA binding proteins. Required for association of the 30S and 50S subunits to form the 70S ribosome, for tRNA binding and peptide bond formation. It has been suggested to have peptidyltransferase activity; this is somewhat controversial. Makes several contacts with the 16S rRNA in the 70S ribosome. This is Large ribosomal subunit protein uL2 from Pyrococcus horikoshii (strain ATCC 700860 / DSM 12428 / JCM 9974 / NBRC 100139 / OT-3).